Here is a 214-residue protein sequence, read N- to C-terminus: tRNA (guanine-N(7)-)-methyltransferase (214 aa).

The S-adenosyl-L-methionine site is built by Glu43, Glu68, Asn99, and Asp121. The active site involves Asp121. Substrate is bound by residues Lys125, Asp157, and 194–197 (TEYE).

This sequence belongs to the class I-like SAM-binding methyltransferase superfamily. TrmB family.

The enzyme catalyses guanosine(46) in tRNA + S-adenosyl-L-methionine = N(7)-methylguanosine(46) in tRNA + S-adenosyl-L-homocysteine. The protein operates within tRNA modification; N(7)-methylguanine-tRNA biosynthesis. Catalyzes the formation of N(7)-methylguanine at position 46 (m7G46) in tRNA. The chain is tRNA (guanine-N(7)-)-methyltransferase from Alkaliphilus metalliredigens (strain QYMF).